Here is a 342-residue protein sequence, read N- to C-terminus: L-threonine 3-dehydrogenase (342 aa).

Position 38 (Cys-38) interacts with Zn(2+). Active-site charge relay system residues include Thr-40 and His-43. 6 residues coordinate Zn(2+): His-63, Glu-64, Cys-93, Cys-96, Cys-99, and Cys-107. NAD(+) is bound by residues Ile-175, Asp-195, Arg-200, 262–264 (LGI), and 286–287 (IY).

It belongs to the zinc-containing alcohol dehydrogenase family. Homotetramer. Zn(2+) is required as a cofactor.

The protein resides in the cytoplasm. The enzyme catalyses L-threonine + NAD(+) = (2S)-2-amino-3-oxobutanoate + NADH + H(+). Its pathway is amino-acid degradation; L-threonine degradation via oxydo-reductase pathway; glycine from L-threonine: step 1/2. Functionally, catalyzes the NAD(+)-dependent oxidation of L-threonine to 2-amino-3-ketobutyrate. The protein is L-threonine 3-dehydrogenase of Burkholderia cenocepacia (strain ATCC BAA-245 / DSM 16553 / LMG 16656 / NCTC 13227 / J2315 / CF5610) (Burkholderia cepacia (strain J2315)).